Here is a 350-residue protein sequence, read N- to C-terminus: Probable L-aspartate decarboxylase (350 aa).

Lys-206 is subject to N6-(pyridoxal phosphate)lysine.

Belongs to the group II decarboxylase family. MfnA subfamily. It depends on pyridoxal 5'-phosphate as a cofactor.

It carries out the reaction L-aspartate + H(+) = beta-alanine + CO2. Its pathway is cofactor biosynthesis; coenzyme A biosynthesis. Functionally, catalyzes the decarboxylation of L-aspartate to produce beta-alanine. The chain is Probable L-aspartate decarboxylase from Haloarcula marismortui (strain ATCC 43049 / DSM 3752 / JCM 8966 / VKM B-1809) (Halobacterium marismortui).